Reading from the N-terminus, the 203-residue chain is Peptidyl-tRNA hydrolase (203 aa).

Tyr-16 provides a ligand contact to tRNA. The Proton acceptor role is filled by His-21. Residues Tyr-68, Asn-70, and Asn-116 each contribute to the tRNA site.

The protein belongs to the PTH family. As to quaternary structure, monomer.

It localises to the cytoplasm. The catalysed reaction is an N-acyl-L-alpha-aminoacyl-tRNA + H2O = an N-acyl-L-amino acid + a tRNA + H(+). Hydrolyzes ribosome-free peptidyl-tRNAs (with 1 or more amino acids incorporated), which drop off the ribosome during protein synthesis, or as a result of ribosome stalling. Its function is as follows. Catalyzes the release of premature peptidyl moieties from peptidyl-tRNA molecules trapped in stalled 50S ribosomal subunits, and thus maintains levels of free tRNAs and 50S ribosomes. This Nostoc sp. (strain PCC 7120 / SAG 25.82 / UTEX 2576) protein is Peptidyl-tRNA hydrolase.